We begin with the raw amino-acid sequence, 114 residues long: DNA-binding protein rrnAC3180 (114 aa).

Residues 1–11 are compositionally biased toward acidic residues; sequence MSGDPSEEELE. Residues 1–45 are disordered; sequence MSGDPSEEELEELRKKKMEQLKEQQGGEGEGQEAAQQQAEAQKQA. A compositionally biased stretch (basic and acidic residues) spans 12-22; the sequence is ELRKKKMEQLK. A compositionally biased stretch (low complexity) spans 32–45; it reads QEAAQQQAEAQKQA.

Belongs to the PDCD5 family.

This Haloarcula marismortui (strain ATCC 43049 / DSM 3752 / JCM 8966 / VKM B-1809) (Halobacterium marismortui) protein is DNA-binding protein rrnAC3180.